The following is a 678-amino-acid chain: Serine/threonine-protein kinase PLK (678 aa).

The 288-residue stretch at 22–309 (YRPGKLLGKG…VKECLDHSWL (288 aa)) folds into the Protein kinase domain. Residues 28 to 36 (LGKGGFAYV) and lysine 51 contribute to the ATP site. Residue aspartate 145 is the Proton acceptor of the active site. Residues threonine 179 and threonine 183 each carry the phosphothreonine; by autocatalysis modification. POLO box domains follow at residues 435–516 (YIMS…YLEN) and 563–644 (FLKK…IIKA). The tract at residues 658–678 (KDSTKKSASGSSTRQLGQGGE) is disordered. Residues 663 to 678 (KSASGSSTRQLGQGGE) are compositionally biased toward polar residues.

It belongs to the protein kinase superfamily. Ser/Thr protein kinase family. CDC5/Polo subfamily. In terms of assembly, interacts with Kin-13. In terms of processing, autophosphorylated. Autophosphorylation is critical for its function in cell growth, cytokinesis and formation of flagella.

Its subcellular location is the cell projection. The protein resides in the cilium. It localises to the flagellum. The protein localises to the cytoplasm. It is found in the cytoskeleton. Its subcellular location is the flagellum basal body. The protein resides in the flagellum axoneme. It localises to the spindle. The protein localises to the membrane. The catalysed reaction is L-seryl-[protein] + ATP = O-phospho-L-seryl-[protein] + ADP + H(+). It carries out the reaction L-threonyl-[protein] + ATP = O-phospho-L-threonyl-[protein] + ADP + H(+). Its activity is regulated as follows. Inhibited by GW843286X (GW), an ATP-competitive inhibitor. Inhibition leads to reduced growth, increased number of cells with more than four nuclei, increased number of cells with condensed nuclei, cell cycle arrest at G2/M or G1/S phase depending on the treatment time with GW, and increased length of membrane-bound portions of the caudal and anterior flagella. Functionally, involved in cell cycle. Involved in cell division. Involved in cytokinesis. Involved in flagella biogenesis and in regulation of flagella length in interphase. Involved in formation of median bodies during interphase. Phosphorylates Kin-13 in vitro. Likely regulates microtubule (MT) depolymerizing activity of Kin-13. The polypeptide is Serine/threonine-protein kinase PLK (Giardia intestinalis (strain ATCC 50803 / WB clone C6) (Giardia lamblia)).